A 233-amino-acid polypeptide reads, in one-letter code: 5'-methylthioadenosine/S-adenosylhomocysteine nucleosidase (233 aa).

E12 (proton acceptor) is an active-site residue. Substrate is bound by residues G78, I152, and 173–174; that span reads ME. Residue D197 is the Proton donor of the active site.

Belongs to the PNP/UDP phosphorylase family. MtnN subfamily. In terms of assembly, homodimer.

It carries out the reaction S-adenosyl-L-homocysteine + H2O = S-(5-deoxy-D-ribos-5-yl)-L-homocysteine + adenine. The enzyme catalyses S-methyl-5'-thioadenosine + H2O = 5-(methylsulfanyl)-D-ribose + adenine. It catalyses the reaction 5'-deoxyadenosine + H2O = 5-deoxy-D-ribose + adenine. It participates in amino-acid biosynthesis; L-methionine biosynthesis via salvage pathway; S-methyl-5-thio-alpha-D-ribose 1-phosphate from S-methyl-5'-thioadenosine (hydrolase route): step 1/2. In terms of biological role, catalyzes the irreversible cleavage of the glycosidic bond in both 5'-methylthioadenosine (MTA) and S-adenosylhomocysteine (SAH/AdoHcy) to adenine and the corresponding thioribose, 5'-methylthioribose and S-ribosylhomocysteine, respectively. Also cleaves 5'-deoxyadenosine, a toxic by-product of radical S-adenosylmethionine (SAM) enzymes, into 5-deoxyribose and adenine. Thus, is required for in vivo function of the radical SAM enzymes biotin synthase and lipoic acid synthase, that are inhibited by 5'-deoxyadenosine accumulation. The protein is 5'-methylthioadenosine/S-adenosylhomocysteine nucleosidase of Yersinia pestis bv. Antiqua (strain Angola).